The sequence spans 268 residues: Phosphatidylglycerol--prolipoprotein diacylglyceryl transferase (268 aa).

4 helical membrane-spanning segments follow: residues leucine 14–tryptophan 34, leucine 57–tyrosine 77, phenylalanine 90–phenylalanine 110, and isoleucine 117–glycine 137. Arginine 140 is an a 1,2-diacyl-sn-glycero-3-phospho-(1'-sn-glycerol) binding site. Transmembrane regions (helical) follow at residues glutamine 174–isoleucine 194, tyrosine 200–phenylalanine 220, and glycine 238–isoleucine 258.

Belongs to the Lgt family.

The protein localises to the cell inner membrane. The catalysed reaction is L-cysteinyl-[prolipoprotein] + a 1,2-diacyl-sn-glycero-3-phospho-(1'-sn-glycerol) = an S-1,2-diacyl-sn-glyceryl-L-cysteinyl-[prolipoprotein] + sn-glycerol 1-phosphate + H(+). It participates in protein modification; lipoprotein biosynthesis (diacylglyceryl transfer). Catalyzes the transfer of the diacylglyceryl group from phosphatidylglycerol to the sulfhydryl group of the N-terminal cysteine of a prolipoprotein, the first step in the formation of mature lipoproteins. This is Phosphatidylglycerol--prolipoprotein diacylglyceryl transferase from Francisella tularensis subsp. holarctica (strain FTNF002-00 / FTA).